The following is a 584-amino-acid chain: Endoribonuclease YBEY, chloroplastic (584 aa).

The transit peptide at 1–50 (MLSRVCPTLRYNRIWSAHAREMPRATLLLLQPNFFHSSPKTALVNRLDVT) directs the protein to the chloroplast. 3 residues coordinate Zn(2+): His-240, His-244, and His-250.

It belongs to the endoribonuclease YbeY family. Zn(2+) serves as cofactor.

It is found in the plastid. The protein localises to the chloroplast stroma. Endoribonuclease required for chloroplast ribosomal RNA (rRNA) processing and essential for normal growth and development. May be involved in maturation of both the 5' and 3' ends of 16S, 23S, and 4.5S rRNAs. Cleaves chloroplast rRNAs, mRNAs and tRNAs in vitro. The sequence is that of Endoribonuclease YBEY, chloroplastic from Arabidopsis thaliana (Mouse-ear cress).